We begin with the raw amino-acid sequence, 179 residues long: Putative manganese efflux pump MntP (179 aa).

The next 6 membrane-spanning stretches (helical) occupy residues 4-24 (VLIL…GLGI), 39-59 (LFFG…GIGL), 69-89 (IVAF…AFNE), 102-122 (ILLT…YSLH), 128-148 (IYLS…IGVY), and 159-179 (SKAE…ILLF).

Belongs to the MntP (TC 9.B.29) family.

Its subcellular location is the cell inner membrane. In terms of biological role, probably functions as a manganese efflux pump. In Aliarcobacter butzleri (strain RM4018) (Arcobacter butzleri), this protein is Putative manganese efflux pump MntP.